A 703-amino-acid chain; its full sequence is FERM domain-containing protein 7 (703 aa).

In terms of domain architecture, FERM spans 2–282; that stretch reads LHLKVQFLDD…EYHAFFRLSE (281 aa). A coiled-coil region spans residues 525 to 552; it reads RNMRIKSLQQDLQELQEAMARTSGRSNI.

In the developing cerebral cortex, strong expression is observed in the ventricular and intermediate zones at 13 and 17 dpc. At 17 dpc and P0, expression appears to be restricted to the cortical plate. In neonates, highly expressed in cortex, hippocampus, cerebellum, olfactory bulb and eye with little or no expression in liver, kidney, skeletal muscle or heart muscle (at protein level).

It is found in the cell projection. The protein localises to the neuron projection. It localises to the growth cone. Functionally, plays a role in neurite development, may be through the activation of the GTPase RAC1. Plays a role in the control of eye movement and gaze stability. The chain is FERM domain-containing protein 7 from Mus musculus (Mouse).